A 472-amino-acid polypeptide reads, in one-letter code: Tryptophanase (472 aa).

Position 270 is an N6-(pyridoxal phosphate)lysine (lysine 270).

Belongs to the beta-eliminating lyase family. As to quaternary structure, homotetramer. The cofactor is pyridoxal 5'-phosphate.

The catalysed reaction is L-tryptophan + H2O = indole + pyruvate + NH4(+). It functions in the pathway amino-acid degradation; L-tryptophan degradation via pyruvate pathway; indole and pyruvate from L-tryptophan: step 1/1. The polypeptide is Tryptophanase (tnaA) (Haemophilus influenzae).